The sequence spans 92 residues: Protein S100-A5 (92 aa).

2 EF-hand domains span residues M12–M47 and M47–A82. Residues T28, E33, D60, N62, D64, E66, and E71 each contribute to the Ca(2+) site.

It belongs to the S-100 family. In terms of assembly, homodimer.

Functionally, binds calcium, zinc and copper. One subunit can simultaneously bind 2 calcium ions or 2 copper ions plus 1 zinc ion. Calcium and copper ions compete for the same binding sites. The sequence is that of Protein S100-A5 (S100A5) from Homo sapiens (Human).